A 236-amino-acid chain; its full sequence is Sugar fermentation stimulation protein homolog (236 aa).

It belongs to the SfsA family.

The sequence is that of Sugar fermentation stimulation protein homolog from Gloeobacter violaceus (strain ATCC 29082 / PCC 7421).